Reading from the N-terminus, the 427-residue chain is MSAIVDIVGREILDSRGNPTVECDVLLESGVMGRAAVPSGASTGSREAIELRDGDKSRYLGKGVLKAVEHINTEISEAVLGLDASEQAFLDRTLIDLDGTDNKSRLGANATLAVSMAVARAAAEEAGLPLYRYFGGSGAMQMPVPMMNVVNGGAHANNNLDLQELMIIPIGAPSFREAVRYGAEVFHALKKILHDKGMSVAVGDEGGFAPNVPSHEAAIQMILEAIDKAGYVAGEQIALGLDCAASEFYKDGKYVLAGEGLSLDATEWTNILATWVDKYPIISIEDGMAEGDWDGWKILTERLGKQVQLVGDDLFVTNTKILKEGIDKHIANSILIKINQIGTLTETFAAIEMAKRAGYTAVISHRSGETEDSTIADIAVGTNAGQIKTGSLSRSDRMAKYNQLLRIEEDLGDIATYPGRAAFYNLR.

(2R)-2-phosphoglycerate is bound at residue Q163. E205 (proton donor) is an active-site residue. Positions 242, 285, and 312 each coordinate Mg(2+). (2R)-2-phosphoglycerate contacts are provided by K337, R366, S367, and K388. K337 acts as the Proton acceptor in catalysis.

Belongs to the enolase family. Requires Mg(2+) as cofactor.

The protein localises to the cytoplasm. It localises to the secreted. It is found in the cell surface. It catalyses the reaction (2R)-2-phosphoglycerate = phosphoenolpyruvate + H2O. It functions in the pathway carbohydrate degradation; glycolysis; pyruvate from D-glyceraldehyde 3-phosphate: step 4/5. Catalyzes the reversible conversion of 2-phosphoglycerate (2-PG) into phosphoenolpyruvate (PEP). It is essential for the degradation of carbohydrates via glycolysis. This chain is Enolase, found in Polaromonas sp. (strain JS666 / ATCC BAA-500).